A 539-amino-acid polypeptide reads, in one-letter code: Transcription factor prr1 (539 aa).

A DNA-binding region spans residues 7 to 111 (SSDFVRKLFN…LLDNIKRKAP (105 aa)). Thr221 carries the phosphothreonine modification. Position 223 is a phosphoserine (Ser223). Residues 251–263 (GTAQPSLYNTPSS) show a composition bias toward polar residues. The interval 251–281 (GTAQPSLYNTPSSDYELANQEKPADSMASAA) is disordered. In terms of domain architecture, Response regulatory spans 369–483 (RILLVEDDEL…TLLQLLKKQL (115 aa)). Asp418 bears the 4-aspartylphosphate mark.

It in the N-terminal section; belongs to the HSF family.

It is found in the nucleus. Its function is as follows. Involved in oxidative stress. Transcription factor that acts upon trr1 and ctt1. This chain is Transcription factor prr1 (prr1), found in Schizosaccharomyces pombe (strain 972 / ATCC 24843) (Fission yeast).